We begin with the raw amino-acid sequence, 585 residues long: A-type ATP synthase subunit A (585 aa).

ATP is bound at residue Gly-231–Thr-238.

It belongs to the ATPase alpha/beta chains family. In terms of assembly, has multiple subunits with at least A(3), B(3), C, D, E, F, H, I and proteolipid K(x).

It localises to the cell membrane. The catalysed reaction is ATP + H2O + 4 H(+)(in) = ADP + phosphate + 5 H(+)(out). Its function is as follows. Produces ATP from ADP in the presence of a proton gradient across the membrane. The archaeal alpha chain is a catalytic subunit. Functionally, component of the A-type ATP synthase that produces ATP from ADP in the presence of a proton gradient across the membrane. The A chain is the catalytic subunit. The sequence is that of A-type ATP synthase subunit A from Thermococcus sp. (strain KI).